A 232-amino-acid chain; its full sequence is Orotidine 5'-phosphate decarboxylase (232 aa).

Substrate is bound by residues Asp11, Lys33, 60–69, Thr119, Arg180, Gln189, Gly209, and Arg210; that span reads DLKLYDIPNT. Lys62 acts as the Proton donor in catalysis.

This sequence belongs to the OMP decarboxylase family. Type 1 subfamily. As to quaternary structure, homodimer.

The enzyme catalyses orotidine 5'-phosphate + H(+) = UMP + CO2. Its pathway is pyrimidine metabolism; UMP biosynthesis via de novo pathway; UMP from orotate: step 2/2. Catalyzes the decarboxylation of orotidine 5'-monophosphate (OMP) to uridine 5'-monophosphate (UMP). The protein is Orotidine 5'-phosphate decarboxylase of Wigglesworthia glossinidia brevipalpis.